The primary structure comprises 443 residues: Probable glycine dehydrogenase (decarboxylating) subunit 1 (443 aa).

It belongs to the GcvP family. N-terminal subunit subfamily. As to quaternary structure, the glycine cleavage system is composed of four proteins: P, T, L and H. In this organism, the P 'protein' is a heterodimer of two subunits.

The enzyme catalyses N(6)-[(R)-lipoyl]-L-lysyl-[glycine-cleavage complex H protein] + glycine + H(+) = N(6)-[(R)-S(8)-aminomethyldihydrolipoyl]-L-lysyl-[glycine-cleavage complex H protein] + CO2. Functionally, the glycine cleavage system catalyzes the degradation of glycine. The P protein binds the alpha-amino group of glycine through its pyridoxal phosphate cofactor; CO(2) is released and the remaining methylamine moiety is then transferred to the lipoamide cofactor of the H protein. This Nitratidesulfovibrio vulgaris (strain DSM 19637 / Miyazaki F) (Desulfovibrio vulgaris) protein is Probable glycine dehydrogenase (decarboxylating) subunit 1.